The following is a 311-amino-acid chain: MQAKILRIATRKSPLAICQACYVCNKLKHYHPHIQTELIPIITTGDTSLHTVSKTNKIKKGAFIKELEYALIEHRADIAVHSMKDVTVLLPKELIIPVLCKRHDPRDAFVSIQYPNIHSLPTGSIIGTSSLRRQCQIRAQRSDLILHDLRGNINTRIKKLHQGQYNAIILAVAGLTRLKLTKYIQTYIDPSELLPAMGQGVIAIECRINDINTISLLSPLYHKETSLCIKSERAVTTYLESYCRLPIASYAEIQNNQIWLRALIGLPDGSIIIRTEGIASLDKAEELGLNLAKDLLIQFKKNTHFDINSIK.

S-(dipyrrolylmethanemethyl)cysteine is present on Cys243.

This sequence belongs to the HMBS family. In terms of assembly, monomer. Requires dipyrromethane as cofactor.

It carries out the reaction 4 porphobilinogen + H2O = hydroxymethylbilane + 4 NH4(+). It participates in porphyrin-containing compound metabolism; protoporphyrin-IX biosynthesis; coproporphyrinogen-III from 5-aminolevulinate: step 2/4. Tetrapolymerization of the monopyrrole PBG into the hydroxymethylbilane pre-uroporphyrinogen in several discrete steps. This is Porphobilinogen deaminase from Blochmanniella floridana.